Reading from the N-terminus, the 1020-residue chain is Phosphatidylinositol 3-kinase VPS34 (1020 aa).

The region spanning 49 to 210 (LSTKFEDPTV…NWLDKMVLPK (162 aa)) is the C2 PI3K-type domain. One can recognise a PIK helical domain in the interval 331–577 (DKELKPTPQL…DGPIKIYMDI (247 aa)). A PI3K/PI4K catalytic domain is found at 666 to 1004 (YPEESSVFKS…LINDSVNAFL (339 aa)). Residues 672 to 678 (VFKSSLA) form a G-loop region. Residues 873-881 (GVGDRHLDN) are catalytic loop. The tract at residues 892–913 (HADFGYILGRDPKPFPPLMKLP) is activation loop.

The protein belongs to the PI3/PI4-kinase family. As to quaternary structure, component of the autophagy-specific VPS34 PI3-kinase complex I composed of at least VPS15, VPS30, VPS34, and of the VPS34 PI3-kinase complex II composed of VPS15, VPS30, VPS34 and VPS38. Interacts with VMNA7. Post-translationally, autophosphorylated.

The protein resides in the golgi apparatus. Its subcellular location is the trans-Golgi network membrane. The protein localises to the endosome membrane. The enzyme catalyses a 1,2-diacyl-sn-glycero-3-phospho-(1D-myo-inositol) + ATP = a 1,2-diacyl-sn-glycero-3-phospho-(1D-myo-inositol-3-phosphate) + ADP + H(+). Its function is as follows. Multifunctional phosphatidylinositol 3-kinase involved in acidification of vacuoles, pH-dependent cell growth, and autophagocytosis. Plays an important role in protein transport and virulence. Component of the autophagy-specific VPS34 PI3-kinase complex I essential to recruit the ATG8-phosphatidylinositol conjugate and the ATG12-ATG5 conjugate to the pre-autophagosomal structure. Also involved in endosome-to-Golgi retrograde transport as part of the VPS34 PI3-kinase complex II. This second complex is required for the endosome-to-Golgi retrieval of PEP1 and KEX2, and the recruitment of VPS5 and VPS7, two components of the retromer complex, to endosomal membranes (probably through the synthesis of a specific pool of phosphatidylinositol 3-phosphate recruiting the retromer to the endosomes). Finally, it might also be involved in ethanol tolerance and cell wall integrity. This Candida albicans (Yeast) protein is Phosphatidylinositol 3-kinase VPS34.